A 159-amino-acid chain; its full sequence is Peptide deformylase (159 aa).

2 residues coordinate Fe cation: cysteine 88 and histidine 130. Glutamate 131 is an active-site residue. Fe cation is bound at residue histidine 134.

Belongs to the polypeptide deformylase family. The cofactor is Fe(2+).

The enzyme catalyses N-terminal N-formyl-L-methionyl-[peptide] + H2O = N-terminal L-methionyl-[peptide] + formate. Removes the formyl group from the N-terminal Met of newly synthesized proteins. Requires at least a dipeptide for an efficient rate of reaction. N-terminal L-methionine is a prerequisite for activity but the enzyme has broad specificity at other positions. In Caldanaerobacter subterraneus subsp. tengcongensis (strain DSM 15242 / JCM 11007 / NBRC 100824 / MB4) (Thermoanaerobacter tengcongensis), this protein is Peptide deformylase.